Reading from the N-terminus, the 149-residue chain is Large ribosomal subunit protein uL15 (149 aa).

The segment at 1–58 is disordered; it reads MKLHNLRPAKGGEVKARKRVGRGYGSGLGHNAGRGRDGQNSRSGGGVRPGFEGGQMPL. Composition is skewed to gly residues over residues 22–32 and 43–53; these read RGYGSGLGHNA and SGGGVRPGFEG.

It belongs to the universal ribosomal protein uL15 family. As to quaternary structure, part of the 50S ribosomal subunit.

Its function is as follows. Binds to the 23S rRNA. The sequence is that of Large ribosomal subunit protein uL15 from Finegoldia magna (strain ATCC 29328 / DSM 20472 / WAL 2508) (Peptostreptococcus magnus).